A 246-amino-acid polypeptide reads, in one-letter code: 5-oxoprolinase subunit A (246 aa).

It belongs to the LamB/PxpA family. Forms a complex composed of PxpA, PxpB and PxpC.

It catalyses the reaction 5-oxo-L-proline + ATP + 2 H2O = L-glutamate + ADP + phosphate + H(+). Catalyzes the cleavage of 5-oxoproline to form L-glutamate coupled to the hydrolysis of ATP to ADP and inorganic phosphate. This is 5-oxoprolinase subunit A from Cupriavidus pinatubonensis (strain JMP 134 / LMG 1197) (Cupriavidus necator (strain JMP 134)).